The sequence spans 247 residues: Sensory rhodopsin-1 (247 aa).

At 1–4 (MTGA) the chain is on the extracellular side. The chain crosses the membrane as a helical span at residues 5 to 26 (VSAAYWIAAVAFLVGLGITAAL). At 27–35 (YAKLGESED) the chain is on the cytoplasmic side. The chain crosses the membrane as a helical span at residues 36-57 (RGRLAALAVIPGFAGLAYAGMA). The Extracellular segment spans residues 58–71 (LGIGTVTVNGAELV). The chain crosses the membrane as a helical span at residues 72 to 93 (GLRYVDWIVTTPLLVGFIGYVA). Residues 94 to 96 (GAS) are Cytoplasmic-facing. A helical transmembrane segment spans residues 97-119 (RRAIAGVMLADALMIAFGAGAVV). Residues 120 to 123 (TGGT) are Extracellular-facing. The chain crosses the membrane as a helical span at residues 124-151 (LKWVLFGVSSIFHVTLFAYLYVVFPRAV). The Cytoplasmic portion of the chain corresponds to 152–154 (PDD). The chain crosses the membrane as a helical span at residues 155–182 (PMQRGLFSLLKNHVGLLWLAYPFVWLMG). Residues 183–190 (PAGIGFTT) lie on the Extracellular side of the membrane. The chain crosses the membrane as a helical span at residues 191-223 (GVGAALTYAFLDVLAKVPYVYFFYARRQAFTDV). Position 206 is an N6-(retinylidene)lysine (lysine 206). Over 224-247 (VSAATADREDATDAVGDGAPTAAD) the chain is Cytoplasmic.

It belongs to the archaeal/bacterial/fungal opsin family. In terms of assembly, interacts with HTR-I.

It localises to the cell membrane. Functionally, involved in the control of phototaxis. Mediates both photoattractant (in the orange light) and photophobic (in the near UV light) responses. The signal is then transmitted to the sensory rhodopsin I transducer (HTR-I). This Halobacterium sp. (strain SG1) protein is Sensory rhodopsin-1 (sop1).